Consider the following 683-residue polypeptide: Elongation factor G-like protein (683 aa).

One can recognise a tr-type G domain in the interval 5 to 267; sequence QNVRSAALIG…YLGDIGVSPE (263 aa). GTP-binding positions include 14–21, 73–77, and 127–130; these read GHNGSGKS, DTPGF, and NQMD.

The protein belongs to the TRAFAC class translation factor GTPase superfamily. Classic translation factor GTPase family. EF-G/EF-2 subfamily.

In Thermotoga maritima (strain ATCC 43589 / DSM 3109 / JCM 10099 / NBRC 100826 / MSB8), this protein is Elongation factor G-like protein.